We begin with the raw amino-acid sequence, 308 residues long: Apolipoprotein E (308 aa).

The signal sequence occupies residues 1–18; sequence MKFLWAALVVTLLAGCRA. Tandem repeats lie at residues 75–96, 97–118, 119–140, 141–162, 163–184, 185–206, 207–224, and 225–246. Positions 75-246 are 8 X 22 AA approximate tandem repeats; that stretch reads LLIEETMKEV…RLDDMRDQME (172 aa). The LDL and other lipoprotein receptors binding stretch occupies residues 153–163; sequence HLRKLRKRLLR. 157–160 serves as a coordination point for heparin; it reads LRKR. Positions 205-281 are lipid-binding and lipoprotein association; the sequence is AIPPSQQLRE…SWFEPLVQDM (77 aa). 220–227 is a binding site for heparin; it reads GQKVRGRL. A homooligomerization region spans residues 257-308; sequence SQVRLQAEAFQTRLKSWFEPLVQDMQRQWASLVEKVQSTLGISPSTKPSKTK. A specificity for association with VLDL region spans residues 269 to 281; that stretch reads RLKSWFEPLVQDM.

The protein belongs to the apolipoprotein A1/A4/E family. In terms of assembly, homotetramer. May interact with ABCA1; functionally associated with ABCA1 in the biogenesis of HDLs. May interact with APP/A4 amyloid-beta peptide; the interaction is extremely stable in vitro but its physiological significance is unclear. May interact with MAPT. May interact with MAP2. In the cerebrospinal fluid, interacts with secreted SORL1. Interacts with PMEL; this allows the loading of PMEL luminal fragment on ILVs to induce fibril nucleation. Post-translationally, APOE exists as multiple glycosylated and sialylated glycoforms within cells and in plasma. The extent of glycosylation and sialylation are tissue and context specific. In terms of processing, glycated in plasma VLDL. Phosphorylated by FAM20C in the extracellular medium.

The protein localises to the secreted. Its subcellular location is the extracellular space. The protein resides in the extracellular matrix. It is found in the extracellular vesicle. It localises to the endosome. The protein localises to the multivesicular body. Its function is as follows. APOE is an apolipoprotein, a protein associating with lipid particles, that mainly functions in lipoprotein-mediated lipid transport between organs via the plasma and interstitial fluids. APOE is a core component of plasma lipoproteins and is involved in their production, conversion and clearance. Apolipoproteins are amphipathic molecules that interact both with lipids of the lipoprotein particle core and the aqueous environment of the plasma. As such, APOE associates with chylomicrons, chylomicron remnants, very low density lipoproteins (VLDL) and intermediate density lipoproteins (IDL) but shows a preferential binding to high-density lipoproteins (HDL). It also binds a wide range of cellular receptors including the LDL receptor/LDLR and the very low-density lipoprotein receptor/VLDLR that mediate the cellular uptake of the APOE-containing lipoprotein particles. Finally, APOE also has a heparin-binding activity and binds heparan-sulfate proteoglycans on the surface of cells, a property that supports the capture and the receptor-mediated uptake of APOE-containing lipoproteins by cells. This Pteropus pselaphon (Bonin flying fox) protein is Apolipoprotein E (APOE).